A 267-amino-acid chain; its full sequence is Eukaryotic translation initiation factor 3 subunit J (267 aa).

Residues 1–70 (MSWNDDDVFA…KDKKSSTDQV (70 aa)) are disordered. The segment covering 24–38 (WDAEEPIMESWDAEE) has biased composition (acidic residues). Residues 39–66 (TPAKKETSPKPDSKKNAKKDSKKDKKSS) are compositionally biased toward basic and acidic residues. Positions 192-220 (IESIRQSIATLNVLMKDKEREERRARLAK) form a coiled coil.

The protein belongs to the eIF-3 subunit J family. Component of the eukaryotic translation initiation factor 3 (eIF-3) complex.

The protein resides in the cytoplasm. Its function is as follows. Component of the eukaryotic translation initiation factor 3 (eIF-3) complex, which is involved in protein synthesis of a specialized repertoire of mRNAs and, together with other initiation factors, stimulates binding of mRNA and methionyl-tRNAi to the 40S ribosome. The eIF-3 complex specifically targets and initiates translation of a subset of mRNAs involved in cell proliferation. This chain is Eukaryotic translation initiation factor 3 subunit J, found in Vanderwaltozyma polyspora (strain ATCC 22028 / DSM 70294 / BCRC 21397 / CBS 2163 / NBRC 10782 / NRRL Y-8283 / UCD 57-17) (Kluyveromyces polysporus).